The sequence spans 514 residues: ATP synthase subunit alpha (514 aa).

Gly170–Thr177 serves as a coordination point for ATP.

Belongs to the ATPase alpha/beta chains family. In terms of assembly, F-type ATPases have 2 components, CF(1) - the catalytic core - and CF(0) - the membrane proton channel. CF(1) has five subunits: alpha(3), beta(3), gamma(1), delta(1), epsilon(1). CF(0) has three main subunits: a(1), b(2) and c(9-12). The alpha and beta chains form an alternating ring which encloses part of the gamma chain. CF(1) is attached to CF(0) by a central stalk formed by the gamma and epsilon chains, while a peripheral stalk is formed by the delta and b chains.

It is found in the cell inner membrane. The catalysed reaction is ATP + H2O + 4 H(+)(in) = ADP + phosphate + 5 H(+)(out). Its function is as follows. Produces ATP from ADP in the presence of a proton gradient across the membrane. The alpha chain is a regulatory subunit. This Pseudomonas fluorescens (strain ATCC BAA-477 / NRRL B-23932 / Pf-5) protein is ATP synthase subunit alpha.